The chain runs to 167 residues: NADH-quinone oxidoreductase subunit B 2 (167 aa).

4 residues coordinate [4Fe-4S] cluster: Cys38, Cys39, Cys104, and Cys133.

It belongs to the complex I 20 kDa subunit family. As to quaternary structure, NDH-1 is composed of 14 different subunits. Subunits NuoB, C, D, E, F, and G constitute the peripheral sector of the complex. The cofactor is [4Fe-4S] cluster.

The protein localises to the cell membrane. It carries out the reaction a quinone + NADH + 5 H(+)(in) = a quinol + NAD(+) + 4 H(+)(out). Its function is as follows. NDH-1 shuttles electrons from NADH, via FMN and iron-sulfur (Fe-S) centers, to quinones in the respiratory chain. The immediate electron acceptor for the enzyme in this species is believed to be ubiquinone. Couples the redox reaction to proton translocation (for every two electrons transferred, four hydrogen ions are translocated across the cytoplasmic membrane), and thus conserves the redox energy in a proton gradient. This is NADH-quinone oxidoreductase subunit B 2 from Roseiflexus sp. (strain RS-1).